We begin with the raw amino-acid sequence, 174 residues long: UPF0340 protein SE_1711 (174 aa).

The protein belongs to the UPF0340 family.

The sequence is that of UPF0340 protein SE_1711 from Staphylococcus epidermidis (strain ATCC 12228 / FDA PCI 1200).